A 217-amino-acid chain; its full sequence is 3,4-dihydroxy-2-butanone 4-phosphate synthase (217 aa).

D-ribulose 5-phosphate contacts are provided by residues 37–38 (RE), D42, 150–154 (RGGHT), and E174. E38 provides a ligand contact to Mg(2+). H153 is a Mg(2+) binding site.

It belongs to the DHBP synthase family. In terms of assembly, homodimer. Mg(2+) serves as cofactor. It depends on Mn(2+) as a cofactor.

The enzyme catalyses D-ribulose 5-phosphate = (2S)-2-hydroxy-3-oxobutyl phosphate + formate + H(+). Its pathway is cofactor biosynthesis; riboflavin biosynthesis; 2-hydroxy-3-oxobutyl phosphate from D-ribulose 5-phosphate: step 1/1. Functionally, catalyzes the conversion of D-ribulose 5-phosphate to formate and 3,4-dihydroxy-2-butanone 4-phosphate. This is 3,4-dihydroxy-2-butanone 4-phosphate synthase from Salmonella paratyphi A (strain ATCC 9150 / SARB42).